The chain runs to 303 residues: uncharacterized protein (303 aa).

This is an uncharacterized protein from Magallana gigas (Pacific oyster).